The following is a 178-amino-acid chain: Large ribosomal subunit protein uL5 (178 aa).

Belongs to the universal ribosomal protein uL5 family. In terms of assembly, part of the 50S ribosomal subunit; part of the 5S rRNA/L5/L18/L25 subcomplex. Contacts the 5S rRNA and the P site tRNA. Forms a bridge to the 30S subunit in the 70S ribosome.

Functionally, this is one of the proteins that bind and probably mediate the attachment of the 5S RNA into the large ribosomal subunit, where it forms part of the central protuberance. In the 70S ribosome it contacts protein S13 of the 30S subunit (bridge B1b), connecting the 2 subunits; this bridge is implicated in subunit movement. Contacts the P site tRNA; the 5S rRNA and some of its associated proteins might help stabilize positioning of ribosome-bound tRNAs. This Psychrobacter sp. (strain PRwf-1) protein is Large ribosomal subunit protein uL5.